The primary structure comprises 81 residues: Small ribosomal subunit protein bS16 (81 aa).

This sequence belongs to the bacterial ribosomal protein bS16 family.

The chain is Small ribosomal subunit protein bS16 from Desulfotalea psychrophila (strain LSv54 / DSM 12343).